A 369-amino-acid polypeptide reads, in one-letter code: MWSGRKLGSSGGWFLRVLGPGGCNTKAARPLISSAVYVKNQLSGTLQIKPGVFNEYRTIWFKSYRTIFSCLNRIKSFRYPWARLYSTSQTTVDSGEVKTFLALAHKWWDEQGVYAPLHSMNDLRVPFIRDNLLKTIPNHQPGKPLLGMKILDVGCGGGLLTEPLGRLGASVIGIDPVDENIKTAQCHKSFDPVLDKRIEYRVCSLEEIVEETAETFDAVVASEVVEHVIDLETFLQCCCQVLKPGGSLFITTINKTQLSYALGIVFSEQIASIVPKGTHTWEKFVSPETLESILESNGLSVQTVVGMLYNPFSGYWHWSENTSLNYAAYAVKSRVQEHPASAEFVLKGETEELQANACTNPAVHEKLKK.

The transit peptide at 1 to 85 directs the protein to the mitochondrion; that stretch reads MWSGRKLGSS…SFRYPWARLY (85 aa). S-adenosyl-L-methionine is bound at residue Arg-124. 2 positions are modified to N6-acetyllysine: Lys-143 and Lys-149. Positions 154 and 175 each coordinate S-adenosyl-L-methionine. Lys-196 is modified (N6-acetyllysine). Ser-222 contacts S-adenosyl-L-methionine. Glu-223, Glu-226, and His-227 together coordinate Mg(2+).

It belongs to the class I-like SAM-binding methyltransferase superfamily. UbiG/COQ3 family. Component of a multi-subunit COQ enzyme complex, composed of at least COQ3, COQ4, COQ5, COQ6, COQ7 and COQ9. Mg(2+) serves as cofactor.

The protein localises to the mitochondrion inner membrane. The enzyme catalyses 3,4-dihydroxy-5-(all-trans-decaprenyl)benzoate + S-adenosyl-L-methionine = 4-hydroxy-3-methoxy-5-(all-trans-decaprenyl)benzoate + S-adenosyl-L-homocysteine + H(+). It catalyses the reaction a 3-demethylubiquinone + S-adenosyl-L-methionine = a ubiquinone + S-adenosyl-L-homocysteine. The catalysed reaction is 3-demethylubiquinol-10 + S-adenosyl-L-methionine = ubiquinol-10 + S-adenosyl-L-homocysteine + H(+). It participates in cofactor biosynthesis; ubiquinone biosynthesis. Functionally, O-methyltransferase required for two non-consecutive steps during ubiquinone biosynthesis. Catalyzes the 2 O-methylation of 3,4-dihydroxy-5-(all-trans-decaprenyl)benzoic acid into 4-hydroxy-3-methoxy-5-(all-trans-decaprenyl)benzoic acid. Also catalyzes the last step of ubiquinone biosynthesis by mediating methylation of 3-demethylubiquinone into ubiquinone. Also able to mediate the methylation of 3-demethylubiquinol-10 into ubiquinol-10. This chain is Ubiquinone biosynthesis O-methyltransferase, mitochondrial, found in Homo sapiens (Human).